The following is a 102-amino-acid chain: Large ribosomal subunit protein bL21 (102 aa).

This sequence belongs to the bacterial ribosomal protein bL21 family. As to quaternary structure, part of the 50S ribosomal subunit. Contacts protein L20.

In terms of biological role, this protein binds to 23S rRNA in the presence of protein L20. The sequence is that of Large ribosomal subunit protein bL21 from Cytophaga hutchinsonii (strain ATCC 33406 / DSM 1761 / CIP 103989 / NBRC 15051 / NCIMB 9469 / D465).